Here is a 539-residue protein sequence, read N- to C-terminus: Envelope glycoprotein E (539 aa).

The signal sequence occupies residues 1–24 (MRPPVRASLGLLVAWAIGACVCAA). The Virion surface segment spans residues 25 to 410 (AIETTWKHAS…RPAAPRAARL (386 aa)). Residues 66–91 (CGSLRPSWVSLRPPGQVLDTVVDAEC) form an interaction with gI region. Residues 168–203 (APRRPEPAGGTPPPRDDEEGGTEEPATPAPPPHPHP) are disordered. Intrachain disulfides connect C262/C288, C271/C280, and C305/C314. The disordered stretch occupies residues 378–404 (ERSPPRYRPPPVEPTPSAQPTGPRPAA). The chain crosses the membrane as a helical span at residues 411 to 431 (VGVLGAAVGLAVAGLSVWACV). The Intravirion segment spans residues 432-539 (TCRRARAWRA…PSSPDPPHRR (108 aa)). The Internalization motif motif lies at 452-455 (YIRL). 2 disordered regions span residues 466-497 (SYGDSDDSEYDSDSDRLPGTDPAPKRGSGFQI) and 517-539 (ITFRADDTSRYRDPSSPDPPHRR). Residues 468-480 (GDSDDSEYDSDSD) are acidic. A compositionally biased stretch (basic and acidic residues) spans 520–531 (RADDTSRYRDPS).

Belongs to the alphaherpesvirinae glycoprotein E family. As to quaternary structure, interacts with gI. Phosphorylated on serines within the acidic cluster. Phosphorylation determines whether endocytosed viral gE traffics to the trans-Golgi network or recycles to the cell membrane.

The protein localises to the virion membrane. It is found in the host cell membrane. It localises to the host cell junction. The protein resides in the host Golgi apparatus membrane. Its subcellular location is the host endosome membrane. Its function is as follows. In epithelial cells, the heterodimer gE/gI is required for the cell-to-cell spread of the virus, by sorting nascent virions to cell junctions. Once the virus reaches the cell junctions, virus particles can spread to adjacent cells extremely rapidly through interactions with cellular receptors that accumulate at these junctions. Implicated in basolateral spread in polarized cells. In neuronal cells, gE/gI is essential for the anterograde spread of the infection throughout the host nervous system. Together with US9, the heterodimer gE/gI is involved in the sorting and transport of viral structural components toward axon tips. This Macaca fascicularis (Crab-eating macaque) protein is Envelope glycoprotein E (gE).